The following is a 310-amino-acid chain: 5-oxoprolinase subunit C (310 aa).

It belongs to the PxpC family. In terms of assembly, forms a complex composed of PxpA, PxpB and PxpC.

It carries out the reaction 5-oxo-L-proline + ATP + 2 H2O = L-glutamate + ADP + phosphate + H(+). Its function is as follows. Catalyzes the cleavage of 5-oxoproline to form L-glutamate coupled to the hydrolysis of ATP to ADP and inorganic phosphate. The protein is 5-oxoprolinase subunit C of Escherichia coli (strain K12).